The sequence spans 349 residues: Protein-glutamate methylesterase/protein-glutamine glutaminase (349 aa).

Residues 5 to 122 (RVLSVDDSAL…REGMLAYNEM (118 aa)) form the Response regulatory domain. A 4-aspartylphosphate modification is found at Asp56. A CheB-type methylesterase domain is found at 152–344 (LLSSEKLIAI…QQMLAKISAG (193 aa)). Catalysis depends on residues Ser164, His190, and Asp286.

It belongs to the CheB family. In terms of assembly, interacts with CheA. Binds to a C-terminal pentapeptide sequence carried by certain receptors. Post-translationally, phosphorylated by CheA. Phosphorylation of the N-terminal regulatory domain activates the methylesterase activity.

It is found in the cytoplasm. The enzyme catalyses [protein]-L-glutamate 5-O-methyl ester + H2O = L-glutamyl-[protein] + methanol + H(+). The catalysed reaction is L-glutaminyl-[protein] + H2O = L-glutamyl-[protein] + NH4(+). Its activity is regulated as follows. Methylesterase activity is activated via phosphorylation in response to negative chemotactic stimuli and is inhibited in the presence of attractants. Activation requires both CheA and CheW. Functionally, involved in chemotaxis. Part of a chemotaxis signal transduction system that modulates chemotaxis in response to various stimuli. Catalyzes the demethylation of specific methylglutamate residues introduced into the chemoreceptors (methyl-accepting chemotaxis proteins or MCP) by CheR. Also mediates the irreversible deamidation of specific glutamine residues to glutamic acid. Catalyzes its own deactivation by removing the activating phosphoryl group. The protein is Protein-glutamate methylesterase/protein-glutamine glutaminase of Escherichia coli (strain K12).